The primary structure comprises 457 residues: UDP-N-acetylmuramate--L-alanine ligase (457 aa).

117 to 123 (GTHGKTT) contributes to the ATP binding site.

Belongs to the MurCDEF family.

It is found in the cytoplasm. The enzyme catalyses UDP-N-acetyl-alpha-D-muramate + L-alanine + ATP = UDP-N-acetyl-alpha-D-muramoyl-L-alanine + ADP + phosphate + H(+). Its pathway is cell wall biogenesis; peptidoglycan biosynthesis. Cell wall formation. This chain is UDP-N-acetylmuramate--L-alanine ligase, found in Clostridium kluyveri (strain NBRC 12016).